The sequence spans 112 residues: UPF0212 protein Mpal_1084 (112 aa).

This sequence belongs to the UPF0212 family.

This Methanosphaerula palustris (strain ATCC BAA-1556 / DSM 19958 / E1-9c) protein is UPF0212 protein Mpal_1084.